We begin with the raw amino-acid sequence, 327 residues long: Auxin-responsive protein IAA18 (327 aa).

Disordered regions lie at residues 26–45, 52–98, and 180–202; these read VKEADGEGSRNTNLDADEDK, GLPG…IGTT, and NLTNGSSFKQSPERQNDEADDKA. The EAR-like (transcriptional repression) signature appears at 49–53; that stretch reads LKLGL. Positions 58–69 are enriched in basic and acidic residues; sequence QEERAADSREKI. Low complexity predominate over residues 70–82; it reads QQQQRESSSEPSI. Residues 180-189 are compositionally biased toward polar residues; sequence NLTNGSSFKQ. The segment covering 190–202 has biased composition (basic and acidic residues); sequence SPERQNDEADDKA. In terms of domain architecture, PB1 spans 209 to 313; that stretch reads RPLVKINMDG…TVKRLRVMRR (105 aa).

The protein belongs to the Aux/IAA family. Homodimers and heterodimers. Highly expressed in flowers. Expressed in roots and etiolated seedlings.

The protein resides in the nucleus. Aux/IAA proteins are short-lived transcriptional factors that function as repressors of early auxin response genes at low auxin concentrations. The chain is Auxin-responsive protein IAA18 (IAA18) from Oryza sativa subsp. japonica (Rice).